A 199-amino-acid polypeptide reads, in one-letter code: Ribonuclease HII (199 aa).

The RNase H type-2 domain occupies 12–199 (DLLAGTDEAG…FGPVKKILEG (188 aa)). Asp-18, Glu-19, and Asp-110 together coordinate a divalent metal cation.

Belongs to the RNase HII family. Requires Mn(2+) as cofactor. Mg(2+) is required as a cofactor.

The protein resides in the cytoplasm. It catalyses the reaction Endonucleolytic cleavage to 5'-phosphomonoester.. Endonuclease that specifically degrades the RNA of RNA-DNA hybrids. This chain is Ribonuclease HII, found in Marinomonas sp. (strain MWYL1).